Consider the following 219-residue polypeptide: FMN-dependent NADH:quinone oxidoreductase 2 (219 aa).

FMN is bound by residues Ser10 and 23-25 (SIS).

It belongs to the azoreductase type 1 family. Homodimer. It depends on FMN as a cofactor.

The enzyme catalyses 2 a quinone + NADH + H(+) = 2 a 1,4-benzosemiquinone + NAD(+). It catalyses the reaction N,N-dimethyl-1,4-phenylenediamine + anthranilate + 2 NAD(+) = 2-(4-dimethylaminophenyl)diazenylbenzoate + 2 NADH + 2 H(+). In terms of biological role, quinone reductase that provides resistance to thiol-specific stress caused by electrophilic quinones. Also exhibits azoreductase activity. Catalyzes the reductive cleavage of the azo bond in aromatic azo compounds to the corresponding amines. The chain is FMN-dependent NADH:quinone oxidoreductase 2 from Colwellia psychrerythraea (strain 34H / ATCC BAA-681) (Vibrio psychroerythus).